Reading from the N-terminus, the 248-residue chain is PF03932 family protein CutC (248 aa).

This sequence belongs to the CutC family. In terms of assembly, homodimer.

The protein localises to the cytoplasm. The polypeptide is PF03932 family protein CutC (Escherichia coli O17:K52:H18 (strain UMN026 / ExPEC)).